The following is a 582-amino-acid chain: ATP-dependent lipid A-core flippase (582 aa).

6 helical membrane-spanning segments follow: residues 23–43 (AAFI…TLFL), 61–81 (ILLY…SLNV), 140–160 (AVLV…LMFY), 163–183 (WQLS…VGVV), 247–267 (AIST…VLVI), and 273–293 (MLGE…IMLL). One can recognise an ABC transmembrane type-1 domain in the interval 26-308 (IAAILCMIGY…LTNVNSDFQR (283 aa)). The region spanning 340-576 (IVFDDVTFSY…EGAYFQLHNL (237 aa)) is the ABC transporter domain. Residue 374–381 (GRSGSGKS) coordinates ATP.

Belongs to the ABC transporter superfamily. Lipid exporter (TC 3.A.1.106) family. Homodimer.

It localises to the cell inner membrane. The catalysed reaction is ATP + H2O + lipid A-core oligosaccharideSide 1 = ADP + phosphate + lipid A-core oligosaccharideSide 2.. In terms of biological role, involved in lipopolysaccharide (LPS) biosynthesis. Translocates lipid A-core from the inner to the outer leaflet of the inner membrane. Transmembrane domains (TMD) form a pore in the inner membrane and the ATP-binding domain (NBD) is responsible for energy generation. The protein is ATP-dependent lipid A-core flippase of Idiomarina loihiensis (strain ATCC BAA-735 / DSM 15497 / L2-TR).